Consider the following 173-residue polypeptide: uncharacterized protein (173 aa).

This is an uncharacterized protein from Bacillus subtilis (strain 168).